Reading from the N-terminus, the 173-residue chain is Co-chaperone protein HscB homolog (173 aa).

Residues 5–77 (CHFALFDLQP…SQRARYLLAL (73 aa)) form the J domain.

The protein belongs to the HscB family. In terms of assembly, interacts with HscA and stimulates its ATPase activity.

Co-chaperone involved in the maturation of iron-sulfur cluster-containing proteins. Seems to help targeting proteins to be folded toward HscA. This is Co-chaperone protein HscB homolog from Ectopseudomonas mendocina (strain ymp) (Pseudomonas mendocina).